A 516-amino-acid polypeptide reads, in one-letter code: Cytochrome P450 1A2 (516 aa).

Residue Ser-69 is glycosylated (O-linked (GlcNAc) serine). Residue Phe-226 coordinates substrate. Heme is bound at residue Cys-458.

The protein belongs to the cytochrome P450 family. As to quaternary structure, interacts with PGRMC1; the interaction requires PGRMC1 homodimerization. It depends on heme as a cofactor.

It localises to the endoplasmic reticulum membrane. It is found in the microsome membrane. The enzyme catalyses an organic molecule + reduced [NADPH--hemoprotein reductase] + O2 = an alcohol + oxidized [NADPH--hemoprotein reductase] + H2O + H(+). It catalyses the reaction 17beta-estradiol + reduced [NADPH--hemoprotein reductase] + O2 = 2-hydroxy-17beta-estradiol + oxidized [NADPH--hemoprotein reductase] + H2O + H(+). It carries out the reaction 17beta-estradiol + reduced [NADPH--hemoprotein reductase] + O2 = 4-hydroxy-17beta-estradiol + oxidized [NADPH--hemoprotein reductase] + H2O + H(+). The catalysed reaction is estrone + reduced [NADPH--hemoprotein reductase] + O2 = 2-hydroxyestrone + oxidized [NADPH--hemoprotein reductase] + H2O + H(+). The enzyme catalyses estrone + reduced [NADPH--hemoprotein reductase] + O2 = 4-hydroxyestrone + oxidized [NADPH--hemoprotein reductase] + H2O + H(+). It catalyses the reaction cholesterol + reduced [NADPH--hemoprotein reductase] + O2 = 25-hydroxycholesterol + oxidized [NADPH--hemoprotein reductase] + H2O + H(+). It carries out the reaction all-trans-retinol + reduced [NADPH--hemoprotein reductase] + O2 = all-trans-retinal + oxidized [NADPH--hemoprotein reductase] + 2 H2O + H(+). The catalysed reaction is all-trans-retinal + reduced [NADPH--hemoprotein reductase] + O2 = all-trans-retinoate + oxidized [NADPH--hemoprotein reductase] + H2O + 2 H(+). The enzyme catalyses (5Z,8Z,11Z,14Z)-eicosatetraenoate + reduced [NADPH--hemoprotein reductase] + O2 = (14R,15S)-epoxy-(5Z,8Z,11Z)-eicosatrienoate + oxidized [NADPH--hemoprotein reductase] + H2O + H(+). It catalyses the reaction (5Z,8Z,11Z,14Z)-eicosatetraenoate + reduced [NADPH--hemoprotein reductase] + O2 = (14S,15R)-epoxy-(5Z,8Z,11Z)-eicosatrienoate + oxidized [NADPH--hemoprotein reductase] + H2O + H(+). It carries out the reaction (5Z,8Z,11Z,14Z,17Z)-eicosapentaenoate + reduced [NADPH--hemoprotein reductase] + O2 = (17R,18S)-epoxy-(5Z,8Z,11Z,14Z)-eicosatetraenoate + oxidized [NADPH--hemoprotein reductase] + H2O + H(+). The catalysed reaction is (4Z,7Z,10Z,13Z,16Z,19Z)-docosahexaenoate + reduced [NADPH--hemoprotein reductase] + O2 = (19R,20S)-epoxy-(4Z,7Z,10Z,13Z,16Z)-docosapentaenoate + oxidized [NADPH--hemoprotein reductase] + H2O + H(+). The enzyme catalyses (5S)-hydroperoxy-(6E,8Z,11Z,14Z)-eicosatetraenoate = 5-oxo-(6E,8Z,11Z,14Z)-eicosatetraenoate + H2O. It catalyses the reaction (12S)-hydroperoxy-(5Z,8Z,10E,14Z)-eicosatetraenoate = 12-oxo-(5Z,8Z,10E,14Z)-eicosatetraenoate + H2O. It carries out the reaction (15S)-hydroperoxy-(5Z,8Z,11Z,13E)-eicosatetraenoate = 15-oxo-(5Z,8Z,11Z,13E)-eicosatetraenoate + H2O. The catalysed reaction is (13S)-hydroperoxy-(9Z,11E)-octadecadienoate = 13-oxo-(9Z,11E)-octadecadienoate + H2O. The enzyme catalyses (5Z,8Z,11Z,14Z)-eicosatetraenoate + reduced [NADPH--hemoprotein reductase] + O2 = 13-hydroxy-(5Z,8Z,11Z,14Z)-eicosatetraenoate + oxidized [NADPH--hemoprotein reductase] + H2O + H(+). It catalyses the reaction (5Z,8Z,11Z,14Z)-eicosatetraenoate + reduced [NADPH--hemoprotein reductase] + O2 = 19-hydroxy-(5Z,8Z,11Z,14Z)-eicosatetraenoate + oxidized [NADPH--hemoprotein reductase] + H2O + H(+). It carries out the reaction (9Z,12Z)-octadecadienoate + reduced [NADPH--hemoprotein reductase] + O2 = 11-hydroxy-(9Z,12Z)-octadecadienoate + oxidized [NADPH--hemoprotein reductase] + H2O + H(+). Its pathway is cofactor metabolism; retinol metabolism. It participates in steroid metabolism; cholesterol metabolism. It functions in the pathway lipid metabolism; arachidonate metabolism. Functionally, a cytochrome P450 monooxygenase involved in the metabolism of various endogenous substrates, including fatty acids, steroid hormones and vitamins. Mechanistically, uses molecular oxygen inserting one oxygen atom into a substrate, and reducing the second into a water molecule, with two electrons provided by NADPH via cytochrome P450 reductase (NADPH--hemoprotein reductase). Catalyzes the hydroxylation of carbon-hydrogen bonds. Exhibits high catalytic activity for the formation of hydroxyestrogens from estrone (E1) and 17beta-estradiol (E2), namely 2-hydroxy E1 and E2. Metabolizes cholesterol toward 25-hydroxycholesterol, a physiological regulator of cellular cholesterol homeostasis. May act as a major enzyme for all-trans retinoic acid biosynthesis in the liver. Catalyzes two successive oxidative transformation of all-trans retinol to all-trans retinal and then to the active form all-trans retinoic acid. Primarily catalyzes stereoselective epoxidation of the last double bond of polyunsaturated fatty acids (PUFA), displaying a strong preference for the (R,S) stereoisomer. Catalyzes bisallylic hydroxylation and omega-1 hydroxylation of PUFA. May also participate in eicosanoids metabolism by converting hydroperoxide species into oxo metabolites (lipoxygenase-like reaction, NADPH-independent). Plays a role in the oxidative metabolism of xenobiotics. Catalyzes the N-hydroxylation of heterocyclic amines and the O-deethylation of phenacetin. Metabolizes caffeine via N3-demethylation. This is Cytochrome P450 1A2 (CYP1A2) from Callithrix jacchus (White-tufted-ear marmoset).